We begin with the raw amino-acid sequence, 614 residues long: Baeyer-Villiger monooxygenase peniC (614 aa).

FAD is bound by residues glutamate 99, 107–110 (TWHW), aspartate 119, and tyrosine 125. NADP(+)-binding positions include 255–261 (TGASGVQ), 278–279 (RT), and 398–399 (KR).

The protein belongs to the FAD-binding monooxygenase family. It depends on FAD as a cofactor.

The enzyme catalyses gamma-lactone-2-keto[5.5.5.5]fenestrane + NADPH + O2 + H(+) = penifulvin A + NADP(+) + H2O. It participates in secondary metabolite biosynthesis; terpenoid biosynthesis. Its function is as follows. Baeyer-Villiger monooxygenase; part of the gene cluster that mediates the biosynthesis of penifulvin A, a potent insecticidal sesquiterpene that features a [5.5.5.6]dioxafenestrane ring. Within the pathway, peniC is responsible for the final regioselective Baeyer-Villiger oxidation of gamma-lactone-2-keto[5.5.5.5]fenestran between C1 and C2 to form the delta-lactone moiety of penifulvin A. The first step of the pathway is performed by the sesquiterpene cyclase peniA that generates the angular triquinane scaffold silphinene via cyclization of the linear farnesyl pyrophosphate (FPP). The cytochrome P450 monooxygenase peniB and the flavin-dependent monooxygenase peniC then catalyze a series of oxidation reactions to transform silphinene into penifulvin A. The protein is Baeyer-Villiger monooxygenase peniC of Penicillium patulum (Penicillium griseofulvum).